Here is a 258-residue protein sequence, read N- to C-terminus: Indole-3-glycerol phosphate synthase (258 aa).

It belongs to the TrpC family.

It carries out the reaction 1-(2-carboxyphenylamino)-1-deoxy-D-ribulose 5-phosphate + H(+) = (1S,2R)-1-C-(indol-3-yl)glycerol 3-phosphate + CO2 + H2O. It participates in amino-acid biosynthesis; L-tryptophan biosynthesis; L-tryptophan from chorismate: step 4/5. The sequence is that of Indole-3-glycerol phosphate synthase from Campylobacter jejuni (strain RM1221).